The sequence spans 150 residues: Large ribosomal subunit protein uL13 (150 aa).

It belongs to the universal ribosomal protein uL13 family. As to quaternary structure, part of the 50S ribosomal subunit.

This protein is one of the early assembly proteins of the 50S ribosomal subunit, although it is not seen to bind rRNA by itself. It is important during the early stages of 50S assembly. This chain is Large ribosomal subunit protein uL13, found in Mesoplasma florum (strain ATCC 33453 / NBRC 100688 / NCTC 11704 / L1) (Acholeplasma florum).